The primary structure comprises 142 residues: Thioredoxin-like protein YLS8 (142 aa).

This sequence belongs to the DIM1 family. Expressed in roots, leaves, stems, cauline leaves and flowers.

The sequence is that of Thioredoxin-like protein YLS8 (YLS8) from Arabidopsis thaliana (Mouse-ear cress).